A 333-amino-acid chain; its full sequence is Transcription termination factor MTERF6, chloroplastic/mitochondrial (333 aa).

Belongs to the mTERF family.

The protein resides in the plastid. Its subcellular location is the chloroplast. It localises to the mitochondrion. Functionally, transcription termination factor essential for chloroplast development. Required for maturation of 16S rRNA, 18S rRNA and 23S rRNA in the chloroplast. Binds to a specific region within the tRNA(Ile)(GAU) gene at a position adjacent to and downstream of the 16S rRNA gene. Required for the maturation of tRNA(Ile)(GAU). Binds to double-stranded DNA. The sequence is that of Transcription termination factor MTERF6, chloroplastic/mitochondrial from Arabidopsis thaliana (Mouse-ear cress).